We begin with the raw amino-acid sequence, 359 residues long: Probable D-xylulose reductase A (359 aa).

Zn(2+) contacts are provided by cysteine 47, histidine 72, and glutamate 73. 182–187 (GAGPVG) is a binding site for NAD(+).

This sequence belongs to the zinc-containing alcohol dehydrogenase family. Zn(2+) is required as a cofactor.

The enzyme catalyses xylitol + NAD(+) = D-xylulose + NADH + H(+). It functions in the pathway carbohydrate degradation; L-arabinose degradation via L-arabinitol; D-xylulose 5-phosphate from L-arabinose (fungal route): step 4/5. In terms of biological role, xylitol dehydrogenase which catalyzes the conversion of xylitol to D-xylulose. Xylose is a major component of hemicelluloses such as xylan. Most fungi utilize D-xylose via three enzymatic reactions, xylose reductase (XR), xylitol dehydrogenase (XDH), and xylulokinase, to form xylulose 5-phosphate, which enters pentose phosphate pathway. The chain is Probable D-xylulose reductase A (xdhA) from Emericella nidulans (strain FGSC A4 / ATCC 38163 / CBS 112.46 / NRRL 194 / M139) (Aspergillus nidulans).